The following is a 179-amino-acid chain: Large ribosomal subunit protein uL5 (179 aa).

This sequence belongs to the universal ribosomal protein uL5 family. Part of the 50S ribosomal subunit; part of the 5S rRNA/L5/L18/L25 subcomplex. Contacts the 5S rRNA and the P site tRNA. Forms a bridge to the 30S subunit in the 70S ribosome.

In terms of biological role, this is one of the proteins that bind and probably mediate the attachment of the 5S RNA into the large ribosomal subunit, where it forms part of the central protuberance. In the 70S ribosome it contacts protein S13 of the 30S subunit (bridge B1b), connecting the 2 subunits; this bridge is implicated in subunit movement. Contacts the P site tRNA; the 5S rRNA and some of its associated proteins might help stabilize positioning of ribosome-bound tRNAs. The protein is Large ribosomal subunit protein uL5 of Staphylococcus aureus (strain MW2).